The sequence spans 580 residues: Micronemal protein 4 (580 aa).

A signal peptide spans 1–25; sequence MRASLPVHLVVCTQLSAVWFGVAKA. Apple domains are found at residues 68-137, 141-214, 232-301, 305-375, 419-488, and 492-565; these read CVHS…SRSC, CFEQ…KQFC, CIQL…PKSC, CFSN…VTVG, CVHT…SRTC, and CLRR…YTFC. 15 cysteine pairs are disulfide-bonded: Cys68-Cys137, Cys93-Cys115, Cys97-Cys103, Cys141-Cys214, Cys166-Cys188, Cys170-Cys176, Cys232-Cys301, Cys257-Cys279, Cys261-Cys267, Cys305-Cys380, Cys332-Cys354, Cys336-Cys342, Cys419-Cys488, Cys444-Cys466, and Cys448-Cys454.

In terms of assembly, monomer. Part of the MIC6-MIC1-MIC4 complex. Interacts (via the second apple domain) directly with MIC1 (via the beta-finger region). Interacts with murine TLR2; the interaction promotes activation of bone marrow-derived dendritic cells and macrophages in the host. Interacts with murine TLR4; the interaction promotes activation of bone marrow-derived dendritic cells and macrophages in the host. In terms of processing, proteolytically cleaved at the N- and C-terminus after release from the microneme.

It is found in the cytoplasmic vesicle. It localises to the secretory vesicle. The protein localises to the microneme. The protein resides in the host early endosome. Lacto-N-biose inhibits binding to asialofetuin, a host glycoprotein. Functionally, soluble adhesin with carbohydrate-binding activity. Binds to galactose-terminating oligosaccharides. Required for attachment of the parasite to the host cell prior to invasion. Triggers the activation of murine bone marrow-derived dendritic cells and macrophages and production of pro-inflammatory cytokines, such as IL12 (IL12B/IL12A), in host TLR2/TLR4-dependent manner. Triggers the production of anti-inflammatory cytokine IL10 in murine bone marrow-derived macrophages in host TLR4-dependent manner. Induces transient endotoxin tolerance in murine bone marrow-derived macrophages, manifested by reduced TNF-alpha (TNF) production in response to challenge with lipopolysaccharides (LPS). The sequence is that of Micronemal protein 4 from Toxoplasma gondii.